A 225-amino-acid chain; its full sequence is Cell division protein SepF (225 aa).

Positions 21 to 134 (DEYLDEPEPT…GPLFDEGGPL (114 aa)) are disordered. Basic and acidic residues-rich tracts occupy residues 28 to 54 (EPTRRPARPARDSGRDPYHDRDDRDFA), 77 to 86 (RYESPRHSSR), and 115 to 127 (TRSDRVESRRGPL).

This sequence belongs to the SepF family. Homodimer. Interacts with FtsZ.

The protein resides in the cytoplasm. Functionally, cell division protein that is part of the divisome complex and is recruited early to the Z-ring. Probably stimulates Z-ring formation, perhaps through the cross-linking of FtsZ protofilaments. Its function overlaps with FtsA. The protein is Cell division protein SepF of Rhodococcus opacus (strain B4).